Here is a 60-residue protein sequence, read N- to C-terminus: Large ribosomal subunit protein uL30 (60 aa).

This sequence belongs to the universal ribosomal protein uL30 family. Part of the 50S ribosomal subunit.

The protein is Large ribosomal subunit protein uL30 of Christiangramia forsetii (strain DSM 17595 / CGMCC 1.15422 / KT0803) (Gramella forsetii).